The following is a 337-amino-acid chain: Ribosomal RNA small subunit methyltransferase H (337 aa).

Residues 45 to 47, aspartate 64, phenylalanine 91, aspartate 120, and glutamine 127 contribute to the S-adenosyl-L-methionine site; that span reads GGH.

This sequence belongs to the methyltransferase superfamily. RsmH family.

The protein localises to the cytoplasm. The enzyme catalyses cytidine(1402) in 16S rRNA + S-adenosyl-L-methionine = N(4)-methylcytidine(1402) in 16S rRNA + S-adenosyl-L-homocysteine + H(+). Functionally, specifically methylates the N4 position of cytidine in position 1402 (C1402) of 16S rRNA. The sequence is that of Ribosomal RNA small subunit methyltransferase H from Corynebacterium glutamicum (strain R).